The chain runs to 250 residues: MKIDILTLFPEMFAPLEHSIVGKAKERGLLEINYHNFRENAEKSRHVDDEPYGGGQGMLLRAQPIFDTIDKIDAQKARVILLDPAGRTFDQDFAEELSKEDELIFICGHYEGYDERIKSLVTDEVSLGDFVLTGGELAAMTMVDATVRLIPEVIGKETSHQDDSFSSGLLEYPQYTRPYDYLGMTVPDVLMSGHHENIRKWRLEQSLRKTLERRPDLLENYAMTDEERLILEKIKTEIERTDTVNEQNNL.

S-adenosyl-L-methionine is bound by residues glycine 108 and 127–132; that span reads LGDFVL.

The protein belongs to the RNA methyltransferase TrmD family. Homodimer.

The protein localises to the cytoplasm. The catalysed reaction is guanosine(37) in tRNA + S-adenosyl-L-methionine = N(1)-methylguanosine(37) in tRNA + S-adenosyl-L-homocysteine + H(+). Functionally, specifically methylates guanosine-37 in various tRNAs. This is tRNA (guanine-N(1)-)-methyltransferase from Streptococcus agalactiae serotype Ia (strain ATCC 27591 / A909 / CDC SS700).